Reading from the N-terminus, the 284-residue chain is Transmembrane protein 163b (284 aa).

The segment at 1-44 (MTDSSSASDPTAGPVDPGPAPSAPDPALEDPASTPANGHHPNQA) is disordered. The Cytoplasmic portion of the chain corresponds to 1-83 (MTDSSSASDP…HEAQSYRKKA (83 aa)). Residues 84–104 (LWVSWVSIVVTMILAIAAFTV) traverse the membrane as a helical segment. Over 105 to 111 (SIMRHSA) the chain is Extracellular. The chain crosses the membrane as a helical span at residues 112–132 (SAFGFAFDATLDVLSSIIVLW). Residues 133-145 (RYSNAAAVHSAHR) are Cytoplasmic-facing. Residues 146 to 166 (EYIACVILGVVFILSAITILV) traverse the membrane as a helical segment. Residues 167–182 (KAIHDLATKLEPEVDD) are Extracellular-facing. A helical transmembrane segment spans residues 183 to 203 (FLYSVSVISGVVCTVLCVCKF). Residues 204 to 212 (MLGKVLTSR) are Cytoplasmic-facing. The chain crosses the membrane as a helical span at residues 213–233 (ALITDGFNSLVGGVMGFSILI). Topologically, residues 234–243 (SAEVFKHEPS) are extracellular. The chain crosses the membrane as a helical span at residues 244-264 (VWFLDGTIGILIGLIILAYGV). Residues 265–284 (KLLKDMVPRIRQTRHYERFE) lie on the Cytoplasmic side of the membrane.

It belongs to the TMEM163 family.

The protein localises to the cytoplasmic vesicle. The protein resides in the secretory vesicle. It is found in the synaptic vesicle membrane. Its subcellular location is the early endosome membrane. It localises to the late endosome membrane. The protein localises to the lysosome membrane. The protein resides in the cell membrane. It carries out the reaction Zn(2+)(in) = Zn(2+)(out). In terms of biological role, zinc ion transporter that mediates zinc efflux and plays a crucial role in intracellular zinc homeostasis. Binds the divalent cations Zn(2+), Ni(2+), and to a minor extent Cu(2+). Is a functional modulator of P2X purinoceptors, including P2RX1, P2RX3, P2RX4 and P2RX7. Plays a role in central nervous system development and is required for myelination, and survival and proliferation of oligodendrocytes. The polypeptide is Transmembrane protein 163b (Danio rerio (Zebrafish)).